The chain runs to 67 residues: Small ribosomal subunit protein bS21 (67 aa).

The span at 37 to 52 (EKPSERKAREAAEAVR) shows a compositional bias: basic and acidic residues. The interval 37–67 (EKPSERKAREAAEAVRRARKMERKRLEREGF) is disordered.

This sequence belongs to the bacterial ribosomal protein bS21 family.

The chain is Small ribosomal subunit protein bS21 from Gluconacetobacter diazotrophicus (strain ATCC 49037 / DSM 5601 / CCUG 37298 / CIP 103539 / LMG 7603 / PAl5).